The sequence spans 172 residues: Crossover junction endodeoxyribonuclease RuvC (172 aa).

Residues Asp7, Glu68, and Asp140 contribute to the active site. Mg(2+) is bound by residues Asp7, Glu68, and Asp140.

The protein belongs to the RuvC family. As to quaternary structure, homodimer which binds Holliday junction (HJ) DNA. The HJ becomes 2-fold symmetrical on binding to RuvC with unstacked arms; it has a different conformation from HJ DNA in complex with RuvA. In the full resolvosome a probable DNA-RuvA(4)-RuvB(12)-RuvC(2) complex forms which resolves the HJ. Requires Mg(2+) as cofactor.

It is found in the cytoplasm. The enzyme catalyses Endonucleolytic cleavage at a junction such as a reciprocal single-stranded crossover between two homologous DNA duplexes (Holliday junction).. Its function is as follows. The RuvA-RuvB-RuvC complex processes Holliday junction (HJ) DNA during genetic recombination and DNA repair. Endonuclease that resolves HJ intermediates. Cleaves cruciform DNA by making single-stranded nicks across the HJ at symmetrical positions within the homologous arms, yielding a 5'-phosphate and a 3'-hydroxyl group; requires a central core of homology in the junction. The consensus cleavage sequence is 5'-(A/T)TT(C/G)-3'. Cleavage occurs on the 3'-side of the TT dinucleotide at the point of strand exchange. HJ branch migration catalyzed by RuvA-RuvB allows RuvC to scan DNA until it finds its consensus sequence, where it cleaves and resolves the cruciform DNA. In Polynucleobacter asymbioticus (strain DSM 18221 / CIP 109841 / QLW-P1DMWA-1) (Polynucleobacter necessarius subsp. asymbioticus), this protein is Crossover junction endodeoxyribonuclease RuvC.